A 535-amino-acid polypeptide reads, in one-letter code: GMP synthase [glutamine-hydrolyzing] (535 aa).

A Glutamine amidotransferase type-1 domain is found at 24–217 (KILIVDFGSQ…VRKVAGLKGD (194 aa)). Residue Cys-101 is the Nucleophile of the active site. Catalysis depends on residues His-191 and Glu-193. In terms of domain architecture, GMPS ATP-PPase spans 218–410 (WTMRAFREEA…LGLPEVFVGR (193 aa)). Position 245–251 (245–251 (SGGVDSA)) interacts with ATP.

As to quaternary structure, homodimer.

It carries out the reaction XMP + L-glutamine + ATP + H2O = GMP + L-glutamate + AMP + diphosphate + 2 H(+). The protein operates within purine metabolism; GMP biosynthesis; GMP from XMP (L-Gln route): step 1/1. In terms of biological role, catalyzes the synthesis of GMP from XMP. This is GMP synthase [glutamine-hydrolyzing] from Rhodopseudomonas palustris (strain BisB18).